The following is a 249-amino-acid chain: tRNA pseudouridine synthase A (249 aa).

Aspartate 53 serves as the catalytic Nucleophile. Tyrosine 111 lines the substrate pocket.

It belongs to the tRNA pseudouridine synthase TruA family. In terms of assembly, homodimer.

It carries out the reaction uridine(38/39/40) in tRNA = pseudouridine(38/39/40) in tRNA. Formation of pseudouridine at positions 38, 39 and 40 in the anticodon stem and loop of transfer RNAs. The polypeptide is tRNA pseudouridine synthase A (Streptococcus mutans serotype c (strain ATCC 700610 / UA159)).